Here is a 366-residue protein sequence, read N- to C-terminus: GTP cyclohydrolase 1 type 2 homolog (366 aa).

The Zn(2+) site is built by H64, H65, D102, H326, and E329.

The protein belongs to the GTP cyclohydrolase I type 2/NIF3 family. Homohexamer.

The protein is GTP cyclohydrolase 1 type 2 homolog of Staphylococcus aureus (strain COL).